A 453-amino-acid polypeptide reads, in one-letter code: Probable acetylornithine aminotransferase, mitochondrial (453 aa).

Lys-302 is subject to N6-(pyridoxal phosphate)lysine.

Belongs to the class-III pyridoxal-phosphate-dependent aminotransferase family. Requires pyridoxal 5'-phosphate as cofactor.

The protein resides in the mitochondrion matrix. It catalyses the reaction N(2)-acetyl-L-ornithine + 2-oxoglutarate = N-acetyl-L-glutamate 5-semialdehyde + L-glutamate. The protein operates within amino-acid biosynthesis; L-arginine biosynthesis; N(2)-acetyl-L-ornithine from L-glutamate: step 4/4. In Dictyostelium discoideum (Social amoeba), this protein is Probable acetylornithine aminotransferase, mitochondrial (argD).